We begin with the raw amino-acid sequence, 364 residues long: Aminomethyltransferase (364 aa).

The protein belongs to the GcvT family. As to quaternary structure, the glycine cleavage system is composed of four proteins: P, T, L and H.

It catalyses the reaction N(6)-[(R)-S(8)-aminomethyldihydrolipoyl]-L-lysyl-[protein] + (6S)-5,6,7,8-tetrahydrofolate = N(6)-[(R)-dihydrolipoyl]-L-lysyl-[protein] + (6R)-5,10-methylene-5,6,7,8-tetrahydrofolate + NH4(+). The glycine cleavage system catalyzes the degradation of glycine. The chain is Aminomethyltransferase from Shewanella woodyi (strain ATCC 51908 / MS32).